A 377-amino-acid polypeptide reads, in one-letter code: T-protein (377 aa).

The Chorismate mutase domain maps to methionine 1–glycine 92. A Prephenate/arogenate dehydrogenase domain is found at histidine 101–serine 364.

In the C-terminal section; belongs to the prephenate/arogenate dehydrogenase family.

It is found in the cytoplasm. It carries out the reaction chorismate = prephenate. The catalysed reaction is prephenate + NAD(+) = 3-(4-hydroxyphenyl)pyruvate + CO2 + NADH. Its pathway is amino-acid biosynthesis; L-tyrosine biosynthesis; (4-hydroxyphenyl)pyruvate from prephenate (NAD(+) route): step 1/1. It participates in metabolic intermediate biosynthesis; prephenate biosynthesis; prephenate from chorismate: step 1/1. The sequence is that of T-protein (tyrA) from Haemophilus influenzae (strain ATCC 51907 / DSM 11121 / KW20 / Rd).